A 348-amino-acid polypeptide reads, in one-letter code: Oxygen-dependent coproporphyrinogen-III oxidase (348 aa).

Residue Ser104 coordinates substrate. His108 and His118 together coordinate a divalent metal cation. His118 functions as the Proton donor in the catalytic mechanism. Residue 120–122 (NYR) participates in substrate binding. A divalent metal cation contacts are provided by His152 and His182. The important for dimerization stretch occupies residues 272–307 (YAEFNLVWDRGTIFGLQTNGRTESILMSLPPLARWE).

This sequence belongs to the aerobic coproporphyrinogen-III oxidase family. In terms of assembly, homodimer. A divalent metal cation serves as cofactor.

It localises to the cytoplasm. It carries out the reaction coproporphyrinogen III + O2 + 2 H(+) = protoporphyrinogen IX + 2 CO2 + 2 H2O. Its pathway is porphyrin-containing compound metabolism; protoporphyrin-IX biosynthesis; protoporphyrinogen-IX from coproporphyrinogen-III (O2 route): step 1/1. Its function is as follows. Involved in the heme and chlorophyll biosynthesis. Catalyzes the aerobic oxidative decarboxylation of propionate groups of rings A and B of coproporphyrinogen-III to yield the vinyl groups in protoporphyrinogen-IX. The protein is Oxygen-dependent coproporphyrinogen-III oxidase of Prochlorococcus marinus (strain NATL2A).